We begin with the raw amino-acid sequence, 312 residues long: UDP-N-acetylenolpyruvoylglucosamine reductase (312 aa).

One can recognise an FAD-binding PCMH-type domain in the interval valine 37–glycine 205. Arginine 185 is an active-site residue. Serine 234 serves as the catalytic Proton donor. Glutamate 304 is an active-site residue.

It belongs to the MurB family. It depends on FAD as a cofactor.

Its subcellular location is the cytoplasm. The catalysed reaction is UDP-N-acetyl-alpha-D-muramate + NADP(+) = UDP-N-acetyl-3-O-(1-carboxyvinyl)-alpha-D-glucosamine + NADPH + H(+). Its pathway is cell wall biogenesis; peptidoglycan biosynthesis. Functionally, cell wall formation. The polypeptide is UDP-N-acetylenolpyruvoylglucosamine reductase (Syntrophus aciditrophicus (strain SB)).